The sequence spans 504 residues: Pentatricopeptide repeat-containing protein At5g16640, mitochondrial (504 aa).

Residues 1 to 43 constitute a mitochondrion transit peptide; that stretch reads MRRSISSKAKSFLHRNLLYSGNSGTSPSSSFSICGFCFSRRAY. PPR repeat units lie at residues 45-79, 80-114, 115-149, 150-184, 185-219, 220-254, 255-289, 290-324, 325-359, 360-394, 395-429, 430-464, and 465-499; these read NGSDYREMLRNGIRFMKLDDSLDLFFHMVQCRPLP, SIADFSRLLSAISKMKKYDVVIYLWEQMQMLGIPH, NLCTCNILLNCFCRCSQLSLALSFLGKMIKLGHEP, SIVTFGSLLNGFCRGDRVYDALYMFDQMVGMGYKP, NVVIYNTIIDGLCKSKQVDNALDLLNRMEKDGIGP, DVVTYNSLISGLCSSGRWSDATRMVSCMTKREIYP, DVFTFNALIDACVKEGRVSEAEEFYEEMIRRSLDP, DIVTYSLLIYGLCMYSRLDEAEEMFGFMVSKGCFP, DVVTYSILINGYCKSKKVEHGMKLFCEMSQRGVVR, NTVTYTILIQGYCRAGKLNVAEEIFRRMVFCGVHP, NIITYNVLLHGLCDNGKIEKALVILADMQKNGMDA, DIVTYNIIIRGMCKAGEVADAWDIYCSLNCQGLMP, and DIWTYTTMMLGLYKKGLRREADALFRKMKEDGILP.

Belongs to the PPR family. P subfamily.

The protein resides in the mitochondrion. The polypeptide is Pentatricopeptide repeat-containing protein At5g16640, mitochondrial (Arabidopsis thaliana (Mouse-ear cress)).